A 445-amino-acid polypeptide reads, in one-letter code: C4-dicarboxylate transport protein (445 aa).

8 helical membrane passes run 17–37 (FYQI…LLGY), 56–76 (LVKM…IAAM), 91–111 (VYFL…SHIV), 157–177 (FVGG…LSLA), 200–220 (LVAI…AFTI), 233–253 (MLVG…LGMV), 319–339 (IYMT…LSLG), and 367–387 (AATL…ILGV).

It belongs to the dicarboxylate/amino acid:cation symporter (DAACS) (TC 2.A.23) family.

The protein localises to the cell inner membrane. In terms of biological role, responsible for the transport of dicarboxylates such as succinate, fumarate, and malate from the periplasm across the membrane. The protein is C4-dicarboxylate transport protein of Bordetella avium (strain 197N).